We begin with the raw amino-acid sequence, 430 residues long: Serine--tRNA ligase (430 aa).

Residue 236 to 238 participates in L-serine binding; sequence TAE. 267 to 269 contacts ATP; it reads RRE. An L-serine-binding site is contributed by E290. 354–357 is a binding site for ATP; the sequence is EISS. S390 is a binding site for L-serine.

This sequence belongs to the class-II aminoacyl-tRNA synthetase family. Type-1 seryl-tRNA synthetase subfamily. Homodimer. The tRNA molecule binds across the dimer.

It localises to the cytoplasm. It carries out the reaction tRNA(Ser) + L-serine + ATP = L-seryl-tRNA(Ser) + AMP + diphosphate + H(+). The enzyme catalyses tRNA(Sec) + L-serine + ATP = L-seryl-tRNA(Sec) + AMP + diphosphate + H(+). It participates in aminoacyl-tRNA biosynthesis; selenocysteinyl-tRNA(Sec) biosynthesis; L-seryl-tRNA(Sec) from L-serine and tRNA(Sec): step 1/1. Functionally, catalyzes the attachment of serine to tRNA(Ser). Is also able to aminoacylate tRNA(Sec) with serine, to form the misacylated tRNA L-seryl-tRNA(Sec), which will be further converted into selenocysteinyl-tRNA(Sec). This is Serine--tRNA ligase from Gloeothece citriformis (strain PCC 7424) (Cyanothece sp. (strain PCC 7424)).